The sequence spans 167 residues: Xanthine-guanine phosphoribosyltransferase (167 aa).

Residues 47–48, Gln79, and 102–110 each bind 5-phospho-alpha-D-ribose 1-diphosphate; these read RG and DDLVDSGKT. Position 79 (Gln79) interacts with GMP. Residue Asp103 participates in Mg(2+) binding. Guanine-binding residues include Asp106 and Ile149. Xanthine contacts are provided by Asp106 and Ile149. Residues 106–110 and 148–149 each bind GMP; these read DSGKT and WI.

This sequence belongs to the purine/pyrimidine phosphoribosyltransferase family. XGPT subfamily. As to quaternary structure, homotetramer. It depends on Mg(2+) as a cofactor.

The protein resides in the cell inner membrane. The catalysed reaction is GMP + diphosphate = guanine + 5-phospho-alpha-D-ribose 1-diphosphate. It carries out the reaction XMP + diphosphate = xanthine + 5-phospho-alpha-D-ribose 1-diphosphate. The enzyme catalyses IMP + diphosphate = hypoxanthine + 5-phospho-alpha-D-ribose 1-diphosphate. The protein operates within purine metabolism; GMP biosynthesis via salvage pathway; GMP from guanine: step 1/1. It participates in purine metabolism; XMP biosynthesis via salvage pathway; XMP from xanthine: step 1/1. Its function is as follows. Purine salvage pathway enzyme that catalyzes the transfer of the ribosyl-5-phosphate group from 5-phospho-alpha-D-ribose 1-diphosphate (PRPP) to the N9 position of the 6-oxopurines guanine and xanthine to form the corresponding ribonucleotides GMP (guanosine 5'-monophosphate) and XMP (xanthosine 5'-monophosphate), with the release of PPi. To a lesser extent, also acts on hypoxanthine. In Cereibacter sphaeroides (strain ATCC 17029 / ATH 2.4.9) (Rhodobacter sphaeroides), this protein is Xanthine-guanine phosphoribosyltransferase.